Reading from the N-terminus, the 213-residue chain is Small ribosomal subunit protein uS5 (213 aa).

Residues 54 to 117 form the S5 DRBM domain; it reads LKSETVDVRL…RNAKLNIIPV (64 aa).

Belongs to the universal ribosomal protein uS5 family. Part of the 30S ribosomal subunit. Contacts protein S4.

Its function is as follows. With S4 and S12 plays an important role in translational accuracy. The protein is Small ribosomal subunit protein uS5 of Hyperthermus butylicus (strain DSM 5456 / JCM 9403 / PLM1-5).